The chain runs to 448 residues: B-cell lymphoma 3 protein homolog (448 aa).

The tract at residues methionine 1–alanine 54 is disordered. Serine 39 is modified (phosphoserine). 7 ANK repeats span residues aspartate 129–aspartate 161, leucine 166–alanine 195, histidine 199–valine 228, glutamate 236–alanine 265, serine 270–alanine 299, serine 303–leucine 332, and lysine 333–serine 362. Positions lysine 356–serine 448 are disordered. Residues alanine 361–asparagine 376 are compositionally biased toward polar residues. Serine 369 is modified (phosphoserine). Residues serine 377–serine 398 show a composition bias toward low complexity. Phosphoserine; by GSK3 occurs at positions 396 and 400. Residues threonine 411–proline 423 show a composition bias toward polar residues. Residues phenylalanine 425–glycine 436 show a composition bias toward low complexity. Positions arginine 437–serine 448 are enriched in pro residues.

Component of a complex consisting of the NF-kappa-B p52-p52 homodimer and BCL3. Component of a complex consisting of the NF-kappa-B p50-p50 homodimer and BCL3. Interacts with N4BP2, COPS5 and PIR. Interacts with CYLD. Post-translationally, polyubiquitinated. Ubiquitination via 'Lys-63'-linked ubiquitin chains is required for nuclear accumulation. Deubiquitinated by CYLD, which acts on 'Lys-63'-linked ubiquitin chains. Deubiquitination by CYLD prevents nuclear accumulation. Activated by phosphorylation.

The protein localises to the nucleus. The protein resides in the cytoplasm. Its subcellular location is the perinuclear region. Contributes to the regulation of transcriptional activation of NF-kappa-B target genes. In the cytoplasm, inhibits the nuclear translocation of the NF-kappa-B p50 subunit. In the nucleus, acts as a transcriptional activator that promotes transcription of NF-kappa-B target genes. Contributes to the regulation of cell proliferation. This is B-cell lymphoma 3 protein homolog (Bcl3) from Mus musculus (Mouse).